The sequence spans 162 residues: Transcription antitermination protein NusB (162 aa).

It belongs to the NusB family.

Involved in transcription antitermination. Required for transcription of ribosomal RNA (rRNA) genes. Binds specifically to the boxA antiterminator sequence of the ribosomal RNA (rrn) operons. The chain is Transcription antitermination protein NusB from Xanthomonas euvesicatoria pv. vesicatoria (strain 85-10) (Xanthomonas campestris pv. vesicatoria).